The primary structure comprises 291 residues: MTTLAIDIGGTKLAAALIDKNLRISQRRELPTPASKTPDALREALKALVEPLRAEARQVAIASTGIIQEGMLLALNPHNLGGLLHFPLVQTLETIAGLPTLAVNDAQAAAWAEYHALPDDIRDMVFITVSTGVGGGVVCDGKLLTGKGGLAGHLGHTLADPHGPVCGCGRVGCVEAIASGRGMAAAARDDLAGCDAKTLFIRAGEGHQQARHLVSQSAQVIARMIADVKATTDCQCVVIGGSVGLAEGYLEQVRAFLMQEPAPYHVALSAARYRHDAGLLGAALLAQGDTL.

Residues 5–12 and 132–139 each bind ATP; these read AIDIGGTK and GVGGGVVC. Zn(2+) is bound by residues H156, C166, C168, and C173.

This sequence belongs to the ROK (NagC/XylR) family. NanK subfamily. In terms of assembly, homodimer.

The catalysed reaction is an N-acyl-D-mannosamine + ATP = an N-acyl-D-mannosamine 6-phosphate + ADP + H(+). It participates in amino-sugar metabolism; N-acetylneuraminate degradation; D-fructose 6-phosphate from N-acetylneuraminate: step 2/5. In terms of biological role, catalyzes the phosphorylation of N-acetylmannosamine (ManNAc) to ManNAc-6-P. The polypeptide is N-acetylmannosamine kinase (Salmonella dublin (strain CT_02021853)).